A 303-amino-acid polypeptide reads, in one-letter code: Flavin-dependent thymidylate synthase (303 aa).

In terms of domain architecture, ThyX spans G41 to Y258. Residues S95, R118 to R120, and E126 each bind FAD. Residues Q115–R118, E126–R130, and R197 contribute to the dUMP site. Residues R118–S128 carry the ThyX motif motif. FAD contacts are provided by residues D213–H215 and H219. R224 contributes to the dUMP binding site. The Involved in ionization of N3 of dUMP, leading to its activation role is filled by R224.

This sequence belongs to the thymidylate synthase ThyX family. Homotetramer. It depends on FAD as a cofactor.

The catalysed reaction is dUMP + (6R)-5,10-methylene-5,6,7,8-tetrahydrofolate + NADPH + H(+) = dTMP + (6S)-5,6,7,8-tetrahydrofolate + NADP(+). Its pathway is pyrimidine metabolism; dTTP biosynthesis. Functionally, catalyzes the reductive methylation of 2'-deoxyuridine-5'-monophosphate (dUMP) to 2'-deoxythymidine-5'-monophosphate (dTMP) while utilizing 5,10-methylenetetrahydrofolate (mTHF) as the methyl donor, and NADPH and FADH(2) as the reductant. In Dictyostelium discoideum (Social amoeba), this protein is Flavin-dependent thymidylate synthase (thyA).